The primary structure comprises 116 residues: Putative pterin-4-alpha-carbinolamine dehydratase (116 aa).

It belongs to the pterin-4-alpha-carbinolamine dehydratase family.

The enzyme catalyses (4aS,6R)-4a-hydroxy-L-erythro-5,6,7,8-tetrahydrobiopterin = (6R)-L-erythro-6,7-dihydrobiopterin + H2O. The protein is Putative pterin-4-alpha-carbinolamine dehydratase of Microcystis aeruginosa (strain NIES-843 / IAM M-2473).